The sequence spans 164 residues: Putative 4-hydroxy-4-methyl-2-oxoglutarate aldolase (164 aa).

Substrate-binding positions include 80 to 83 (GGNL) and Arg-102. Asp-103 lines the a divalent metal cation pocket.

It belongs to the class II aldolase/RraA-like family. As to quaternary structure, homotrimer. It depends on a divalent metal cation as a cofactor.

The catalysed reaction is 4-hydroxy-4-methyl-2-oxoglutarate = 2 pyruvate. It carries out the reaction oxaloacetate + H(+) = pyruvate + CO2. Catalyzes the aldol cleavage of 4-hydroxy-4-methyl-2-oxoglutarate (HMG) into 2 molecules of pyruvate. Also contains a secondary oxaloacetate (OAA) decarboxylase activity due to the common pyruvate enolate transition state formed following C-C bond cleavage in the retro-aldol and decarboxylation reactions. The polypeptide is Putative 4-hydroxy-4-methyl-2-oxoglutarate aldolase (Paraburkholderia phymatum (strain DSM 17167 / CIP 108236 / LMG 21445 / STM815) (Burkholderia phymatum)).